We begin with the raw amino-acid sequence, 236 residues long: UPF0257 lipoprotein YnfC (236 aa).

The first 16 residues, 1–16 (MKKPLLLTLLCMILAG), serve as a signal peptide directing secretion. Cys17 carries the N-palmitoyl cysteine lipid modification. Cys17 carries S-diacylglycerol cysteine lipidation.

Belongs to the UPF0257 family.

Its subcellular location is the cell membrane. This chain is UPF0257 lipoprotein YnfC, found in Salmonella paratyphi C (strain RKS4594).